A 495-amino-acid chain; its full sequence is Alpha,alpha-trehalose-phosphate synthase [UDP-forming] 56 kDa subunit (495 aa).

Residues Tyr102 and Asp156 each contribute to the D-glucose 6-phosphate site. Residues Arg293 and Lys298 each contribute to the UDP site. Residues Arg293 and Lys298 each coordinate UDP-alpha-D-glucose. Arg331 lines the D-glucose 6-phosphate pocket. Residues Ile370 and 396–400 (LVSYE) contribute to the UDP site. UDP-alpha-D-glucose-binding positions include Ile370 and 392–400 (DGMNLVSYE).

The protein belongs to the glycosyltransferase 20 family. The trehalose synthase complex is composed of the two catalytic subunits TPS1 and TPS2 and at least one of the two regulatory subunits TPS3 or TSL1.

The protein resides in the cytoplasm. The catalysed reaction is D-glucose 6-phosphate + UDP-alpha-D-glucose = alpha,alpha-trehalose 6-phosphate + UDP + H(+). It participates in carbohydrate biosynthesis. Activated by fructose 6-phosphate. Inorganic phosphate inhibits the synthase activity in the complex, but activates the synthase activity in the free monomeric form. Its function is as follows. Synthase catalytic subunit of the trehalose synthase complex that catalyzes the production of trehalose from glucose-6-phosphate and UDP-alpha-D-glucose in a two step process. Can function independently of the complex. This is Alpha,alpha-trehalose-phosphate synthase [UDP-forming] 56 kDa subunit from Saccharomyces cerevisiae (strain ATCC 204508 / S288c) (Baker's yeast).